Consider the following 128-residue polypeptide: 3-aminoacrylate deaminase RutC (128 aa).

This sequence belongs to the RutC family. In terms of assembly, homotrimer.

It carries out the reaction (Z)-3-aminoacrylate + H2O + H(+) = 3-oxopropanoate + NH4(+). Functionally, involved in pyrimidine catabolism. Catalyzes the deamination of 3-aminoacrylate to malonic semialdehyde, a reaction that can also occur spontaneously. RutC may facilitate the reaction and modulate the metabolic fitness, rather than catalyzing essential functions. This Escherichia coli O111:H- (strain 11128 / EHEC) protein is 3-aminoacrylate deaminase RutC.